The following is a 140-amino-acid chain: Putative esterase SSO2140 (140 aa).

It belongs to the thioesterase PaaI family.

This Saccharolobus solfataricus (strain ATCC 35092 / DSM 1617 / JCM 11322 / P2) (Sulfolobus solfataricus) protein is Putative esterase SSO2140.